Here is a 134-residue protein sequence, read N- to C-terminus: D-ribose pyranase (134 aa).

His-20 acts as the Proton donor in catalysis. Substrate is bound by residues Asp-28, His-101, and 123-125 (YSN).

Belongs to the RbsD / FucU family. RbsD subfamily. As to quaternary structure, homodecamer.

Its subcellular location is the cytoplasm. The catalysed reaction is beta-D-ribopyranose = beta-D-ribofuranose. Its pathway is carbohydrate metabolism; D-ribose degradation; D-ribose 5-phosphate from beta-D-ribopyranose: step 1/2. Functionally, catalyzes the interconversion of beta-pyran and beta-furan forms of D-ribose. The chain is D-ribose pyranase from Pseudomonas entomophila (strain L48).